Consider the following 453-residue polypeptide: Cytochrome b-c1 complex subunit 2, mitochondrial (453 aa).

A mitochondrion-targeting transit peptide spans 1–14; the sequence is MKLLTRAGSFSRFY. Residues Lys66, Lys199, and Lys250 each carry the N6-acetyllysine modification.

Belongs to the peptidase M16 family. UQCRC2/QCR2 subfamily. Component of the ubiquinol-cytochrome c oxidoreductase (cytochrome b-c1 complex, complex III, CIII), a multisubunit enzyme composed of 11 subunits. The complex is composed of 3 respiratory subunits cytochrome b, cytochrome c1 and Rieske protein UQCRFS1, 2 core protein subunits UQCRC1/QCR1 and UQCRC2/QCR2, and 6 low-molecular weight protein subunits UQCRH/QCR6, UQCRB/QCR7, UQCRQ/QCR8, UQCR10/QCR9, UQCR11/QCR10 and subunit 9, the cleavage product of Rieske protein UQCRFS1. The complex exists as an obligatory dimer and forms supercomplexes (SCs) in the inner mitochondrial membrane with NADH-ubiquinone oxidoreductase (complex I, CI) and cytochrome c oxidase (complex IV, CIV), resulting in different assemblies (supercomplex SCI(1)III(2)IV(1) and megacomplex MCI(2)III(2)IV(2)). Interacts with RAB5IF. Interacts with STMP1.

The protein resides in the mitochondrion inner membrane. Component of the ubiquinol-cytochrome c oxidoreductase, a multisubunit transmembrane complex that is part of the mitochondrial electron transport chain which drives oxidative phosphorylation. The respiratory chain contains 3 multisubunit complexes succinate dehydrogenase (complex II, CII), ubiquinol-cytochrome c oxidoreductase (cytochrome b-c1 complex, complex III, CIII) and cytochrome c oxidase (complex IV, CIV), that cooperate to transfer electrons derived from NADH and succinate to molecular oxygen, creating an electrochemical gradient over the inner membrane that drives transmembrane transport and the ATP synthase. The cytochrome b-c1 complex catalyzes electron transfer from ubiquinol to cytochrome c, linking this redox reaction to translocation of protons across the mitochondrial inner membrane, with protons being carried across the membrane as hydrogens on the quinol. In the process called Q cycle, 2 protons are consumed from the matrix, 4 protons are released into the intermembrane space and 2 electrons are passed to cytochrome c. The 2 core subunits UQCRC1/QCR1 and UQCRC2/QCR2 are homologous to the 2 mitochondrial-processing peptidase (MPP) subunits beta-MPP and alpha-MPP respectively, and they seem to have preserved their MPP processing properties. May be involved in the in situ processing of UQCRFS1 into the mature Rieske protein and its mitochondrial targeting sequence (MTS)/subunit 9 when incorporated into complex III. The sequence is that of Cytochrome b-c1 complex subunit 2, mitochondrial (UQCRC2) from Homo sapiens (Human).